A 547-amino-acid chain; its full sequence is Glucose-6-phosphate isomerase (547 aa).

The active-site Proton donor is the Glu-351. Active-site residues include His-382 and Lys-510.

The protein belongs to the GPI family.

Its subcellular location is the cytoplasm. The catalysed reaction is alpha-D-glucose 6-phosphate = beta-D-fructose 6-phosphate. It participates in carbohydrate biosynthesis; gluconeogenesis. It functions in the pathway carbohydrate degradation; glycolysis; D-glyceraldehyde 3-phosphate and glycerone phosphate from D-glucose: step 2/4. In terms of biological role, catalyzes the reversible isomerization of glucose-6-phosphate to fructose-6-phosphate. The protein is Glucose-6-phosphate isomerase of Saccharophagus degradans (strain 2-40 / ATCC 43961 / DSM 17024).